Here is a 445-residue protein sequence, read N- to C-terminus: Phosphoglucosamine mutase (445 aa).

The active-site Phosphoserine intermediate is the S101. Mg(2+) is bound by residues S101, D240, D242, and D244. The residue at position 101 (S101) is a Phosphoserine.

The protein belongs to the phosphohexose mutase family. It depends on Mg(2+) as a cofactor. Activated by phosphorylation.

The enzyme catalyses alpha-D-glucosamine 1-phosphate = D-glucosamine 6-phosphate. Functionally, catalyzes the conversion of glucosamine-6-phosphate to glucosamine-1-phosphate. The polypeptide is Phosphoglucosamine mutase (Ectopseudomonas mendocina (strain ymp) (Pseudomonas mendocina)).